A 178-amino-acid polypeptide reads, in one-letter code: Caveolin-1 (178 aa).

An N-acetylserine modification is found at serine 2. Serine 2 is modified (phosphoserine). Positions 2-94 are required for homooligomerization; the sequence is SGGKYVDSEG…WKASFTTFTV (93 aa). Residues 2-104 lie on the Cytoplasmic side of the membrane; it reads SGGKYVDSEG…TKYWFYRLLS (103 aa). Lysine 5 carries the N6-acetyllysine; alternate modification. Lysine 5 participates in a covalent cross-link: Glycyl lysine isopeptide (Lys-Gly) (interchain with G-Cter in ubiquitin); alternate. Position 6 is a phosphotyrosine (tyrosine 6). Serine 9 carries the post-translational modification Phosphoserine. Tyrosine 14 bears the Phosphotyrosine; by ABL1 mark. Tyrosine 25 is modified (phosphotyrosine). Glycyl lysine isopeptide (Lys-Gly) (interchain with G-Cter in ubiquitin) cross-links involve residues lysine 26 and lysine 30. Serine 37 is modified (phosphoserine). Glycyl lysine isopeptide (Lys-Gly) (interchain with G-Cter in ubiquitin) cross-links involve residues lysine 39, lysine 47, and lysine 57. The interaction with CAVIN3 stretch occupies residues 82–94; that stretch reads DGIWKASFTTFTV. Positions 105–125 form an intramembrane region, helical; the sequence is ALFGIPMALIWGIYFAILSFL. The Cytoplasmic portion of the chain corresponds to 126-178; the sequence is HIWAVVPCIKSFLIEIQCISRVYSIYVHTVCDPLFEAVGKIFSNVRINLQKEI. Residues 131–142 form an interacts with SPRY1, SPRY2, SPRY3 and SPRY4 region; it reads VPCIKSFLIEIQ. S-palmitoyl cysteine attachment occurs at residues cysteine 133, cysteine 143, and cysteine 156. Residues 149 to 160 form an interacts with SPRY1, SPRY2, and SPRY4 region; the sequence is SIYVHTVCDPLF. Residues 167 to 178 form an interacts with SPRY1, SPRY2, SPRY3 and SPRY4 region; the sequence is FSNVRINLQKEI.

Belongs to the caveolin family. Homooligomer. Interacts (via the N-terminus) with DPP4; the interaction is direct. Forms a stable heterooligomeric complex with CAV2 that targets to lipid rafts and drives caveolae formation. Interacts with PACSIN2; this interaction induces membrane tubulation. Interacts with BMX, BTK, CTNNB1, CDH1, GLIPR2, JUP, NOSTRIN, SNAP25 and STX1A. Interacts with SLC7A9. Interacts with TGFBR1. Interacts with CAVIN3 (via leucine-zipper domain) in a cholesterol-sensitive manner. Interacts with CAVIN1. Interacts with EHD2 in a cholesterol-dependent manner. Forms a ternary complex with UBXN6 and VCP; mediates CAV1 targeting to lysosomes for degradation. Interacts with ABCG1; this interaction regulates ABCG1-mediated cholesterol efflux. Interacts with NEU3; this interaction enhances NEU3 sialidase activity within caveola. Interacts (via C-terminus) with SPRY1, SPRY2 (via C-terminus), SPRY3, and SPRY4. Interacts with IGFBP5; this interaction allows trafficking of IGFBP5 from the plasma membrane to the nucleus. Post-translationally, phosphorylated at Tyr-14 by ABL1 in response to oxidative stress. Ubiquitinated. Undergo monoubiquitination and multi- and/or polyubiquitination. Monoubiquitination of N-terminal lysines promotes integration in a ternary complex with UBXN6 and VCP which promotes oligomeric CAV1 targeting to lysosomes for degradation. Ubiquitinated by ZNRF1; leading to degradation and modulation of the TLR4-mediated immune response.

It is found in the golgi apparatus membrane. Its subcellular location is the cell membrane. It localises to the membrane. The protein localises to the caveola. The protein resides in the membrane raft. Functionally, may act as a scaffolding protein within caveolar membranes. Forms a stable heterooligomeric complex with CAV2 that targets to lipid rafts and drives caveolae formation. Mediates the recruitment of CAVIN proteins (CAVIN1/2/3/4) to the caveolae. Interacts directly with G-protein alpha subunits and can functionally regulate their activity. Involved in the costimulatory signal essential for T-cell receptor (TCR)-mediated T-cell activation. Its binding to DPP4 induces T-cell proliferation and NF-kappa-B activation in a T-cell receptor/CD3-dependent manner. Recruits CTNNB1 to caveolar membranes and may regulate CTNNB1-mediated signaling through the Wnt pathway. Negatively regulates TGFB1-mediated activation of SMAD2/3 by mediating the internalization of TGFBR1 from membrane rafts leading to its subsequent degradation. Binds 20(S)-hydroxycholesterol (20(S)-OHC). This Chlorocebus aethiops (Green monkey) protein is Caveolin-1 (CAV1).